The primary structure comprises 614 residues: Sodium- and chloride-dependent betaine transporter (614 aa).

Residues 1–33 (MDRKVAVPEDGPPVVSWLPEEGEKLDQEGEDQV) form a disordered region. The Cytoplasmic segment spans residues 1–44 (MDRKVAVPEDGPPVVSWLPEEGEKLDQEGEDQVKDRGQWTNKME). Positions 21-33 (EGEKLDQEGEDQV) are enriched in basic and acidic residues. The next 3 membrane-spanning stretches (helical) occupy residues 45-65 (FVLS…FPYL), 73-92 (AFFI…VFFL), and 117-137 (GIGL…IIIL). Topologically, residues 138-210 (AWALFYLFSS…SGIHDLGALR (73 aa)) are extracellular. A disulfide bridge links C157 with C166. N-linked (GlcNAc...) asparagine glycosylation is found at N171 and N183. 9 helical membrane passes run 211-229 (WELA…FCIW), 238-255 (VVYF…ILLI), 291-308 (IFFS…LGSY), 320-341 (IALC…FSIL), 374-393 (MPLS…FLGL), 423-441 (LLIL…FLVT), 458-478 (GICL…VYGA), 499-518 (ISWL…FSLS), and 538-556 (IGWF…FVII). Residues 557 to 614 (TLLKTRGSFKKRLRQLTTPDPSLPQPKQHLYLDGGTSQDCGPSPTKEGLIVGEKETHL) lie on the Cytoplasmic side of the membrane. Residues 591 to 614 (GTSQDCGPSPTKEGLIVGEKETHL) form a disordered region.

This sequence belongs to the sodium:neurotransmitter symporter (SNF) (TC 2.A.22) family. SLC6A12 subfamily. In terms of assembly, interacts with LIN7C. In terms of tissue distribution, kidney.

Its subcellular location is the basolateral cell membrane. The protein localises to the cell membrane. The catalysed reaction is 4-aminobutanoate(out) + chloride(out) + 3 Na(+)(out) = 4-aminobutanoate(in) + chloride(in) + 3 Na(+)(in). It carries out the reaction glycine betaine(out) + 2 chloride(out) + 3 Na(+)(out) = glycine betaine(in) + 2 chloride(in) + 3 Na(+)(in). Its function is as follows. Transporter that mediates cellular uptake of betaine and GABA in a sodium- and chloride-dependent process. May have a role in regulation of GABAergic transmission in the brain through the reuptake of GABA into presynaptic terminals, as well as in osmotic regulation. Probably also involved in renal and hepatic osmotic regulation. This chain is Sodium- and chloride-dependent betaine transporter (SLC6A12), found in Canis lupus familiaris (Dog).